The chain runs to 66 residues: Large ribosomal subunit protein bL35 (66 aa).

Belongs to the bacterial ribosomal protein bL35 family.

This Wigglesworthia glossinidia brevipalpis protein is Large ribosomal subunit protein bL35.